Reading from the N-terminus, the 137-residue chain is MKLGSAIPWALLLSTXTLVSTAQNKGSDDCGGFLKNYSGWISYYKALTTNCVWTIEMKPGHKIILQILPLNLWTIEMKLEVRDQRAGPDNFLKVCGGTTFVYQSSSNVATVKYSRESHHPASSFNVYFYGIPQGAKA.

The first 21 residues, 1–21 (MKLGSAIPWALLLSTXTLVST), serve as a signal peptide directing secretion. An intrachain disulfide couples cysteine 30 to cysteine 51. Positions 30–131 (CGGFLKNYSG…SSFNVYFYGI (102 aa)) constitute a CUB domain. Asparagine 36 carries N-linked (GlcNAc...) asparagine glycosylation.

Belongs to the spermadhesin family. In terms of tissue distribution, seminal plasma or sperm.

The protein localises to the secreted. In terms of biological role, inhibitor of sperm motility. The chain is Seminal plasma sperm motility inhibitor (SPMI) from Sus scrofa (Pig).